The chain runs to 486 residues: N-succinylglutamate 5-semialdehyde dehydrogenase (486 aa).

An NAD(+)-binding site is contributed by 220–225 (GSSRTG). Active-site residues include Glu243 and Cys277.

Belongs to the aldehyde dehydrogenase family. AstD subfamily.

The catalysed reaction is N-succinyl-L-glutamate 5-semialdehyde + NAD(+) + H2O = N-succinyl-L-glutamate + NADH + 2 H(+). Its pathway is amino-acid degradation; L-arginine degradation via AST pathway; L-glutamate and succinate from L-arginine: step 4/5. Its function is as follows. Catalyzes the NAD-dependent reduction of succinylglutamate semialdehyde into succinylglutamate. The sequence is that of N-succinylglutamate 5-semialdehyde dehydrogenase from Shewanella sp. (strain W3-18-1).